A 640-amino-acid polypeptide reads, in one-letter code: Arogenate dehydrogenase 1, chloroplastic (640 aa).

A chloroplast-targeting transit peptide spans 1–18 (MAETLITKPPLSLSFTSL). Prephenate/arogenate dehydrogenase domains follow at residues 53 to 334 (LRIA…GEND) and 365 to 640 (LKIG…LLTS).

Belongs to the prephenate/arogenate dehydrogenase family. In terms of tissue distribution, expressed in roots, stems, leaves, flowers, siliques and seeds. More abundant in seeds.

It localises to the plastid. The protein localises to the chloroplast. It catalyses the reaction L-arogenate + NADP(+) = L-tyrosine + CO2 + NADPH. Its pathway is amino-acid biosynthesis; L-tyrosine biosynthesis; L-tyrosine from L-arogenate (NADP(+) route): step 1/1. Functionally, involved in the biosynthesis of tyrosine. Has no prephenate dehydrogenase activity. The chain is Arogenate dehydrogenase 1, chloroplastic (TYRAAT1) from Arabidopsis thaliana (Mouse-ear cress).